A 459-amino-acid chain; its full sequence is Fe(3+)-Zn(2+) purple acid phosphatase (459 aa).

The N-terminal stretch at 1–22 (MGVVKGLLALALVLNVVVVSNG) is a signal peptide. A Blocked amino end (Gly) modification is found at Gly-23. A glycan (N-linked (GlcNAc...) asparagine; partial) is linked at Asn-108. Asn-136 is a glycosylation site (N-linked (GlcNAc...) asparagine). Fe cation is bound at residue Asp-162. An N-linked (GlcNAc...) asparagine glycan is attached at Asn-170. The Fe cation site is built by Asp-191 and Tyr-194. Asp-191 provides a ligand contact to Zn(2+). Residue Asn-228 coordinates Zn(2+). An N-linked (GlcNAc...) asparagine glycan is attached at Asn-238. Position 313 (His-313) interacts with Zn(2+). His-323 acts as the Proton donor in catalysis. His-350 is a Zn(2+) binding site. His-352 lines the Fe cation pocket. Asn-423 carries an N-linked (GlcNAc...) asparagine glycan.

This sequence belongs to the metallophosphoesterase superfamily. Purple acid phosphatase family. In terms of assembly, homodimer; disulfide-linked. Fe cation is required as a cofactor. It depends on Zn(2+) as a cofactor.

Its subcellular location is the secreted. It catalyses the reaction a phosphate monoester + H2O = an alcohol + phosphate. With respect to regulation, inhibited by compounds CC24201, CC27209, and MO07123. Inhibited by the tetraoxoanions molybdate and phosphate. Not inhibited by EDTA or tartrate. This is Fe(3+)-Zn(2+) purple acid phosphatase from Phaseolus vulgaris (Kidney bean).